The chain runs to 186 residues: uncharacterized protein (186 aa).

The tract at residues 121 to 146 is disordered; it reads TSPLLKKNKPSSDQDDTSKQSFDQDE.

This sequence belongs to the chlamydial CPn_0422/CT_273/TC_0545 family.

This is an uncharacterized protein from Chlamydia muridarum (strain MoPn / Nigg).